The following is a 514-amino-acid chain: Probable outer membrane protein pmp12 (514 aa).

The signal sequence occupies residues 1–21; that stretch reads MTILRNFLTCSALFLALPAAA.

Belongs to the PMP outer membrane protein family.

Its subcellular location is the secreted. The protein resides in the cell wall. The protein localises to the cell outer membrane. In Chlamydia pneumoniae (Chlamydophila pneumoniae), this protein is Probable outer membrane protein pmp12 (pmp12).